The sequence spans 354 residues: MAKKKKLTKGQVRRVRSNQQKRLKKQEESIQWDENMLGASKQGLVITRFGQHADIEDLETGEVQRCNLRRGIESLVSGDRVLWREGLESMAGISGVVEAVEPRTSMLTRPDYYDGLKPVAANIDQMVIVSSVLPELSLNIIDRYLVAAETLNIAPLLVLNKVDLLEVDDRAMYEEWLKEYERIGYKVLFVSKNSGEGISDLEVQLRDRINIFVGQSGVGKSSLVNALMPELEQEVEEGAISENSGLGQHTTTAARLYHIPTGGDLIDSPGVREFGLWHLEAEEVTKAFVEFRPYLGGCKFRDCKHNDDPGCILREAVEKGEVSEVRFENYHRILESMMENKANRQYSRNKKADL.

Basic residues predominate over residues 1–24 (MAKKKKLTKGQVRRVRSNQQKRLK). Residues 1–28 (MAKKKKLTKGQVRRVRSNQQKRLKKQEE) form a disordered region. Positions 113–274 (YDGLKPVAAN…LIDSPGVREF (162 aa)) constitute a CP-type G domain. GTP is bound by residues 160–163 (NKVD) and 214–222 (GQSGVGKSS). Zn(2+)-binding residues include C298, C303, H305, and C311.

It belongs to the TRAFAC class YlqF/YawG GTPase family. RsgA subfamily. In terms of assembly, monomer. Associates with 30S ribosomal subunit, binds 16S rRNA. The cofactor is Zn(2+).

It is found in the cytoplasm. Its function is as follows. One of several proteins that assist in the late maturation steps of the functional core of the 30S ribosomal subunit. Helps release RbfA from mature subunits. May play a role in the assembly of ribosomal proteins into the subunit. Circularly permuted GTPase that catalyzes slow GTP hydrolysis, GTPase activity is stimulated by the 30S ribosomal subunit. The sequence is that of Small ribosomal subunit biogenesis GTPase RsgA 1 from Vibrio parahaemolyticus serotype O3:K6 (strain RIMD 2210633).